The sequence spans 148 residues: Large ribosomal subunit protein uL15 (148 aa).

Residues 1-12 (MSEPIKLHDLRP) show a composition bias toward basic and acidic residues. The tract at residues 1-52 (MSEPIKLHDLRPAKGANKPKTRVGRGEASKGKTAGRGTKGTKARKQVSAAFE) is disordered.

Belongs to the universal ribosomal protein uL15 family. In terms of assembly, part of the 50S ribosomal subunit.

Binds to the 23S rRNA. This is Large ribosomal subunit protein uL15 from Corynebacterium diphtheriae (strain ATCC 700971 / NCTC 13129 / Biotype gravis).